Consider the following 278-residue polypeptide: Undecaprenyl-diphosphatase 1 (278 aa).

Helical transmembrane passes span 46-66 (VVGFTAVIQVGAIAAVLVYFF), 91-111 (YTFTWWVIYATIPVVLVGLAA), 119-139 (LASLWVVAASLLAGSALMWFA), 153-173 (SLPDAMIVGTSQILALLFPGF), 191-211 (VAATRLSFFLSIPALTGAGLY), 225-245 (PLAVGTVVSFFVAYASIAWLL), and 256-276 (FIIYRVAVAVLLAGLLAGGAI).

Belongs to the UppP family.

It is found in the cell membrane. The enzyme catalyses di-trans,octa-cis-undecaprenyl diphosphate + H2O = di-trans,octa-cis-undecaprenyl phosphate + phosphate + H(+). Catalyzes the dephosphorylation of undecaprenyl diphosphate (UPP). Confers resistance to bacitracin. In Frankia alni (strain DSM 45986 / CECT 9034 / ACN14a), this protein is Undecaprenyl-diphosphatase 1.